Here is a 279-residue protein sequence, read N- to C-terminus: Phosphonoacetaldehyde hydrolase (279 aa).

Residue aspartate 20 is the Nucleophile of the active site. Residues aspartate 20 and alanine 22 each contribute to the Mg(2+) site. Residue lysine 62 is the Schiff-base intermediate with substrate of the active site. Position 196 (aspartate 196) interacts with Mg(2+).

It belongs to the HAD-like hydrolase superfamily. PhnX family. As to quaternary structure, homodimer. The cofactor is Mg(2+).

It catalyses the reaction phosphonoacetaldehyde + H2O = acetaldehyde + phosphate + H(+). Functionally, involved in phosphonate degradation. This is Phosphonoacetaldehyde hydrolase from Aeromonas hydrophila subsp. hydrophila (strain ATCC 7966 / DSM 30187 / BCRC 13018 / CCUG 14551 / JCM 1027 / KCTC 2358 / NCIMB 9240 / NCTC 8049).